The primary structure comprises 380 residues: Cytochrome b (380 aa).

The next 4 helical transmembrane spans lie at 34–54 (FGSL…LLAM), 78–99 (WLIR…YLHI), 114–134 (WNTG…GYVL), and 179–199 (FFAL…IHLT). Heme b is bound by residues histidine 84 and histidine 98. Positions 183 and 197 each coordinate heme b. Histidine 202 lines the a ubiquinone pocket. 4 helical membrane-spanning segments follow: residues 227 to 247 (LKDI…ALFS), 289 to 309 (LGGV…PFLH), 321 to 341 (ISQL…WVGS), and 348 to 368 (FIII…VLFP).

It belongs to the cytochrome b family. As to quaternary structure, the cytochrome bc1 complex contains 11 subunits: 3 respiratory subunits (MT-CYB, CYC1 and UQCRFS1), 2 core proteins (UQCRC1 and UQCRC2) and 6 low-molecular weight proteins (UQCRH/QCR6, UQCRB/QCR7, UQCRQ/QCR8, UQCR10/QCR9, UQCR11/QCR10 and a cleavage product of UQCRFS1). This cytochrome bc1 complex then forms a dimer. The cofactor is heme b.

The protein localises to the mitochondrion inner membrane. Its function is as follows. Component of the ubiquinol-cytochrome c reductase complex (complex III or cytochrome b-c1 complex) that is part of the mitochondrial respiratory chain. The b-c1 complex mediates electron transfer from ubiquinol to cytochrome c. Contributes to the generation of a proton gradient across the mitochondrial membrane that is then used for ATP synthesis. This is Cytochrome b (MT-CYB) from Pelecanoides georgicus (South Georgia diving petrel).